Consider the following 216-residue polypeptide: Nicotinamidase (216 aa).

D8 is a catalytic residue. Zn(2+) contacts are provided by D51, H53, and H94. K122 is an active-site residue. C167 serves as the catalytic Nucleophile.

The protein belongs to the isochorismatase family.

The protein localises to the cytoplasm. It is found in the nucleus. Its subcellular location is the peroxisome. The catalysed reaction is nicotinamide + H2O = nicotinate + NH4(+). The protein operates within cofactor biosynthesis; nicotinate biosynthesis; nicotinate from nicotinamide: step 1/1. Its activity is regulated as follows. Inhibited by N-ethylmaleimide, HgCl(2) and PCMB. Competitively inhibited by NAD, NMN and 3-acetylpyridine. Its function is as follows. Catalyzes the deamidation of nicotinamide, an early step in the NAD(+) salvage pathway. Positively regulates SIR2-mediated silencing and longevity by preventing the accumulation of intracellular nicotinamide, an inhibitor of SIR2, during times of stress. Also acts on nicotinyl hydroxamate. In Saccharomyces cerevisiae (strain ATCC 204508 / S288c) (Baker's yeast), this protein is Nicotinamidase (PNC1).